Reading from the N-terminus, the 488-residue chain is Argininosuccinate lyase 2 (488 aa).

This sequence belongs to the lyase 1 family. Argininosuccinate lyase subfamily.

It localises to the cytoplasm. The catalysed reaction is 2-(N(omega)-L-arginino)succinate = fumarate + L-arginine. It functions in the pathway amino-acid biosynthesis; L-arginine biosynthesis; L-arginine from L-ornithine and carbamoyl phosphate: step 3/3. The protein is Argininosuccinate lyase 2 of Rhizobium meliloti (strain 1021) (Ensifer meliloti).